The chain runs to 249 residues: Pyridoxine 5'-phosphate synthase (249 aa).

3-amino-2-oxopropyl phosphate is bound at residue asparagine 7. 1-deoxy-D-xylulose 5-phosphate is bound at residue 9–10 (DH). Arginine 18 contacts 3-amino-2-oxopropyl phosphate. Histidine 43 (proton acceptor) is an active-site residue. The 1-deoxy-D-xylulose 5-phosphate site is built by arginine 45 and histidine 50. The Proton acceptor role is filled by glutamate 70. Position 100 (threonine 100) interacts with 1-deoxy-D-xylulose 5-phosphate. Residue histidine 190 is the Proton donor of the active site. Residues glycine 191 and 212-213 (GH) contribute to the 3-amino-2-oxopropyl phosphate site.

It belongs to the PNP synthase family. As to quaternary structure, homooctamer; tetramer of dimers.

It is found in the cytoplasm. It carries out the reaction 3-amino-2-oxopropyl phosphate + 1-deoxy-D-xylulose 5-phosphate = pyridoxine 5'-phosphate + phosphate + 2 H2O + H(+). It functions in the pathway cofactor biosynthesis; pyridoxine 5'-phosphate biosynthesis; pyridoxine 5'-phosphate from D-erythrose 4-phosphate: step 5/5. In terms of biological role, catalyzes the complicated ring closure reaction between the two acyclic compounds 1-deoxy-D-xylulose-5-phosphate (DXP) and 3-amino-2-oxopropyl phosphate (1-amino-acetone-3-phosphate or AAP) to form pyridoxine 5'-phosphate (PNP) and inorganic phosphate. In Synechococcus sp. (strain CC9311), this protein is Pyridoxine 5'-phosphate synthase.